Here is an 89-residue protein sequence, read N- to C-terminus: Small ribosomal subunit protein uS15 (89 aa).

Belongs to the universal ribosomal protein uS15 family. In terms of assembly, part of the 30S ribosomal subunit. Forms a bridge to the 50S subunit in the 70S ribosome, contacting the 23S rRNA.

In terms of biological role, one of the primary rRNA binding proteins, it binds directly to 16S rRNA where it helps nucleate assembly of the platform of the 30S subunit by binding and bridging several RNA helices of the 16S rRNA. Its function is as follows. Forms an intersubunit bridge (bridge B4) with the 23S rRNA of the 50S subunit in the ribosome. This Dictyoglomus thermophilum (strain ATCC 35947 / DSM 3960 / H-6-12) protein is Small ribosomal subunit protein uS15.